We begin with the raw amino-acid sequence, 545 residues long: Chaperonin GroEL (545 aa).

ATP-binding positions include 30-33 (TLGP), Lys-51, 87-91 (DGTTT), Gly-415, and Asp-496.

The protein belongs to the chaperonin (HSP60) family. In terms of assembly, forms a cylinder of 14 subunits composed of two heptameric rings stacked back-to-back. Interacts with the co-chaperonin GroES.

It is found in the cytoplasm. The enzyme catalyses ATP + H2O + a folded polypeptide = ADP + phosphate + an unfolded polypeptide.. Together with its co-chaperonin GroES, plays an essential role in assisting protein folding. The GroEL-GroES system forms a nano-cage that allows encapsulation of the non-native substrate proteins and provides a physical environment optimized to promote and accelerate protein folding. The protein is Chaperonin GroEL of Rhodobacter capsulatus (Rhodopseudomonas capsulata).